A 479-amino-acid polypeptide reads, in one-letter code: MVPSQRLSRTSSISSNEDPAESHILELEAVSDTNTDCDLDPMEGSEEHSTDGEISSSEEEDEDPTPAHAIPARPSSVVITPTSASFVIPRKKWDLQDKTVTLHRSPLCRDEDEKEETGNSSYTRGHKRRRGEVHGCTDESYGKRRHLPPGARAPRAPRAPRVPRAPRSPRAPRSNRATRGPRSESRGAGRSTRKQARQERSQRPLPNKPWFDMSLVKPVSKITFVTLPSPLASLTLEPIQDPFLQSMLAVAAHPEIGAWQKVQPRHELRRSYKTLREFFTKSTNKDTWLDARMQAIQNAGLCTLVAMLEETIFWLQEITYHGDLPLAPAEDILLACAMSLSKVILTKLKELAPCFLPNTRDYNFVKQLFYITCATARQNKVVETLSSSYVKQPLCLLAAYAAVAPAYINANCRRRHDEVEFLGHYIKNYNPGTLSSLLTEAVETHTRDCRSASCSRLVRAILSPGTGSLGLFFVPGLNQ.

Residues 1–15 (MVPSQRLSRTSSISS) are compositionally biased toward low complexity. Disordered regions lie at residues 1–77 (MVPS…PSSV) and 91–210 (KKWD…NKPW). The span at 35 to 44 (TDCDLDPMEG) shows a compositional bias: acidic residues. Residues 61-146 (DEDPTPAHAI…TDESYGKRRH (86 aa)) form a nuclear export signal and interaction with host NXF1 region. The interval 127-130 (KRRR) is nuclear localization signal. Over residues 132–142 (EVHGCTDESYG) the composition is skewed to basic and acidic residues. The segment at 143-145 (KRR) is nuclear localization signal. Zn(2+)-binding residues include cysteine 354, histidine 445, cysteine 449, and cysteine 454. Residues 354-454 (CFLPNTRDYN…HTRDCRSASC (101 aa)) form a CHC2-type zinc finger.

Belongs to the HHV-1 ICP27 protein family. Interacts with host XPO1 and with the XPO1 export pathway components small GTPase RAN and nucleoporin NUP214. Interacts with host SPEN, OTT1 and OTT3. Interacts with host SRSF1, SRSF3, SRSF7 and SRPK1. Interacts with host DHX9; this interaction may have an inhibitory effect on virion production. Interacts (via N-terminus) with host NXF1; this interaction plays a role in mRNA export. Post-translationally, phosphorylated by cellular protein kinase CK2.

It localises to the host nucleus. It is found in the host cytoplasm. In terms of biological role, promotes the nuclear export of a subset of early and late viral mRNAs by interacting with mRNAs and cellular export proteins. Additionally may prevent the establishment of cellular antiviral state, by acting as an alternative splicing factor for cellular RNAs such as STAT1, resulting in a STAT1 mRNA incapable of producing the STAT1alpha isoform. This is mRNA export factor ICP27 homolog from Homo sapiens (Human).